The chain runs to 333 residues: Ornithine carbamoyltransferase (333 aa).

Carbamoyl phosphate contacts are provided by residues 56-59 (STRT), Arg107, and 134-137 (HPTQ). Residues Asn167, Asp231, and 235-236 (SM) each bind L-ornithine. Carbamoyl phosphate contacts are provided by residues 273 to 274 (CL) and Arg318.

This sequence belongs to the aspartate/ornithine carbamoyltransferase superfamily. OTCase family.

Its subcellular location is the cytoplasm. The catalysed reaction is carbamoyl phosphate + L-ornithine = L-citrulline + phosphate + H(+). Its pathway is amino-acid degradation; L-arginine degradation via ADI pathway; carbamoyl phosphate from L-arginine: step 2/2. In terms of biological role, reversibly catalyzes the transfer of the carbamoyl group from carbamoyl phosphate (CP) to the N(epsilon) atom of ornithine (ORN) to produce L-citrulline. This chain is Ornithine carbamoyltransferase, found in Clostridium botulinum (strain Kyoto / Type A2).